Consider the following 518-residue polypeptide: Glutamate--cysteine ligase (518 aa).

The protein belongs to the glutamate--cysteine ligase type 1 family. Type 1 subfamily.

It carries out the reaction L-cysteine + L-glutamate + ATP = gamma-L-glutamyl-L-cysteine + ADP + phosphate + H(+). Its pathway is sulfur metabolism; glutathione biosynthesis; glutathione from L-cysteine and L-glutamate: step 1/2. This chain is Glutamate--cysteine ligase, found in Shigella sonnei (strain Ss046).